A 214-amino-acid polypeptide reads, in one-letter code: Thioredoxin-like 4, chloroplastic (214 aa).

Low complexity predominate over residues 1–20 (MITASLLPLPATSSSSGRRS). Residues 1–68 (MITASLLPLP…STNGSLPGLP (68 aa)) are disordered. Residues 1 to 71 (MITASLLPLP…GSLPGLPPVV (71 aa)) constitute a chloroplast transit peptide. The span at 21 to 34 (LPPPTTTFPRPPPP) shows a compositional bias: pro residues. Low complexity predominate over residues 42-53 (SSSSSSASSTES). One can recognise a Thioredoxin domain in the interval 72-199 (VEEEEEEFCP…IIAAIQKYTA (128 aa)). Residues C117 and C120 each act as nucleophile in the active site. Residues C117 and C120 are joined by a disulfide bond.

The protein belongs to the thioredoxin family.

The protein resides in the plastid. It localises to the chloroplast. Probable thiol-disulfide oxidoreductase that may participate in various redox reactions. In Oryza sativa subsp. japonica (Rice), this protein is Thioredoxin-like 4, chloroplastic.